The primary structure comprises 852 residues: Disease resistance RPP13-like protein 4 (852 aa).

Residues 17 to 68 adopt a coiled-coil conformation; sequence LEEKGRTVSDYRKQLEDLQSELKYMQSFLKDAERQKRTNETLRTLVADLREL. ADP is bound by residues R149, V161, 189 to 196, R297, and K363; that span reads GMGGLGKT. The NB-ARC domain occupies 164–410; it reads EGDKRKIKEW…MSSLQLSYDE (247 aa). 6 LRR repeats span residues 558–581, 585–609, 633–657, 683–706, 763–786, and 798–824; these read CKYL…ILDE, LQHL…MEDL, FKKL…IGSL, LTNL…ELDS, LPML…FWGN, and LSSL…VTAN.

The protein belongs to the disease resistance NB-LRR family. RPP13 subfamily. In terms of assembly, interacts with ZED1/ZRK5. Component of a stable high-order oligomeric complex made of RKS1 and RPP13L4/ZAR1 which recruits ZED1-related kinases (e.g. uridylylated PBL2 and acetylated ZED1/ZRK5) in the presence of ATP and pathogenic bacteria type III secreted effector (T3SE) proteins (e.g. Pseudomonas syringae HopZ1a and HopF2a and Xanthomonas campestris pv. campestris (Xcc) XopAC/AvrAC) to form a wheel-like pentameric resistosome; this complex triggers immunity toward pathogenic bacteria (e.g. X.campestris and P.syringae), especially in vascular tissues. Interacts with RKS1, ZED1/ZRK5, ZRK3, ZRK6 and ZRK15.

It localises to the cell membrane. The protein resides in the nucleus. With respect to regulation, exhibits autoinhibition activity. Functionally, CC-NB-LRR receptor-like protein required for recognition of pathogenic bacteria type III effectors (T3E) such as Pseudomonas syringae HopZ1a and HopF2a and Xanthomonas campestris pv. campestris (Xcc) XopAC/AvrAC; this recognition requires ZED1-related kinases (e.g. PBL2, ZRK3 and ZED1/ZRK5). Confers allele-specific recognition and virulence attenuation of HopZ1a. Immunity mediated by RPP13L4/ZAR1 is independent of several genes required by other resistance protein signaling pathways such as NDR1 and RAR1. Together with ZED1/ZRK5, involved in the regulation of the ambient temperature-sensitive intersection of growth and immune response in the absence of pathogens. The sequence is that of Disease resistance RPP13-like protein 4 (RPP13L4) from Arabidopsis thaliana (Mouse-ear cress).